Reading from the N-terminus, the 309-residue chain is Wnt inhibitor of Dorsal protein (309 aa).

The signal sequence occupies residues 1–16 (MIFAITFFMGITSTLA). 10 disulfides stabilise this stretch: C51–C62, C102–C110, C112–C121, C162–C179, C164–C174, C232–C269, C248–C262, C266–C308, C284–C299, and C286–C296.

The protein belongs to the Wnt family.

The protein localises to the secreted. It is found in the extracellular space. It localises to the extracellular matrix. Its function is as follows. Binds as a ligand to a family of frizzled seven-transmembrane receptors and acts through a cascade of genes on the nucleus. In Drosophila melanogaster (Fruit fly), this protein is Wnt inhibitor of Dorsal protein (wntD).